The following is a 371-amino-acid chain: Liposome tubulation protein MamY (371 aa).

At 1 to 18 (MLMNFVNNVSKTINGGAR) the chain is on the cytoplasmic side. Residues 19–39 (IVYVGSFSWAVLSLLFVTAFS) traverse the membrane as a helical segment. Residues 40 to 51 (GWNNIFSMLPHE) lie on the Lumenal side of the membrane. The helical transmembrane segment at 52–72 (IFILVLTISLPIALIVLIFML) threads the bilayer. At 73–371 (SQIVRTVESV…LIDGTPISDA (299 aa)) the chain is on the cytoplasmic side.

The protein belongs to the magnetosome MamY family. Probably interacts with MamX and MamZ proteins.

It is found in the magnetosome membrane. Its function is as follows. May be involved in constriction of the cell inner membrane to form mature magnetosomes. Binds cardiolipin and liposomes. May function with MamX, MamZ amd Mms6 in biomineralization. This Magnetospirillum gryphiswaldense (strain DSM 6361 / JCM 21280 / NBRC 15271 / MSR-1) protein is Liposome tubulation protein MamY.